Consider the following 453-residue polypeptide: Tol-Pal system protein TolB (453 aa).

The N-terminal stretch at 1-31 (MINNLSVSMTKVLKIILTIIIILFNTLSILA) is a signal peptide.

This sequence belongs to the TolB family. As to quaternary structure, the Tol-Pal system is composed of five core proteins: the inner membrane proteins TolA, TolQ and TolR, the periplasmic protein TolB and the outer membrane protein Pal. They form a network linking the inner and outer membranes and the peptidoglycan layer.

Its subcellular location is the periplasm. Its function is as follows. Part of the Tol-Pal system, which plays a role in outer membrane invagination during cell division and is important for maintaining outer membrane integrity. The protein is Tol-Pal system protein TolB of Orientia tsutsugamushi (strain Boryong) (Rickettsia tsutsugamushi).